We begin with the raw amino-acid sequence, 122 residues long: Large ribosomal subunit protein uL14 (122 aa).

This sequence belongs to the universal ribosomal protein uL14 family. Part of the 50S ribosomal subunit. Forms a cluster with proteins L3 and L19. In the 70S ribosome, L14 and L19 interact and together make contacts with the 16S rRNA in bridges B5 and B8.

Binds to 23S rRNA. Forms part of two intersubunit bridges in the 70S ribosome. This Sulfurovum sp. (strain NBC37-1) protein is Large ribosomal subunit protein uL14.